Reading from the N-terminus, the 616-residue chain is Dihydroxy-acid dehydratase (616 aa).

D81 contributes to the Mg(2+) binding site. [2Fe-2S] cluster is bound at residue C122. The Mg(2+) site is built by D123 and K124. Position 124 is an N6-carboxylysine (K124). Residue C195 coordinates [2Fe-2S] cluster. Residue E491 coordinates Mg(2+). The active-site Proton acceptor is the S517.

It belongs to the IlvD/Edd family. Homodimer. [2Fe-2S] cluster is required as a cofactor. Mg(2+) serves as cofactor.

It catalyses the reaction (2R)-2,3-dihydroxy-3-methylbutanoate = 3-methyl-2-oxobutanoate + H2O. The enzyme catalyses (2R,3R)-2,3-dihydroxy-3-methylpentanoate = (S)-3-methyl-2-oxopentanoate + H2O. It functions in the pathway amino-acid biosynthesis; L-isoleucine biosynthesis; L-isoleucine from 2-oxobutanoate: step 3/4. It participates in amino-acid biosynthesis; L-valine biosynthesis; L-valine from pyruvate: step 3/4. Functionally, functions in the biosynthesis of branched-chain amino acids. Catalyzes the dehydration of (2R,3R)-2,3-dihydroxy-3-methylpentanoate (2,3-dihydroxy-3-methylvalerate) into 2-oxo-3-methylpentanoate (2-oxo-3-methylvalerate) and of (2R)-2,3-dihydroxy-3-methylbutanoate (2,3-dihydroxyisovalerate) into 2-oxo-3-methylbutanoate (2-oxoisovalerate), the penultimate precursor to L-isoleucine and L-valine, respectively. The protein is Dihydroxy-acid dehydratase of Salmonella schwarzengrund (strain CVM19633).